We begin with the raw amino-acid sequence, 159 residues long: Bacterioferritin (159 aa).

A Ferritin-like diiron domain is found at 1-145; it reads MQGDPEVLRL…TQLELMDKLG (145 aa). Residues Glu-18 and Glu-51 each contribute to the Fe cation site. Position 52 (Met-52) interacts with heme b. Residues His-54, Glu-94, Glu-127, and His-130 each coordinate Fe cation.

The protein belongs to the bacterioferritin family. Homooligomer of 24 subunits, arranged as 12 dimers, that are packed together to form an approximately spherical molecule with a central cavity, in which large amounts of iron can be deposited. Heme b serves as cofactor.

It carries out the reaction 4 Fe(2+) + O2 + 4 H(+) = 4 Fe(3+) + 2 H2O. The catalysed reaction is Fe(2+)(in) = Fe(2+)(out). Iron-storage protein, whose ferroxidase center binds Fe(2+), oxidizes it using dioxygen to Fe(3+), and participates in the subsequent Fe(3+) oxide mineral core formation within the central cavity of the BFR protein shell. The polypeptide is Bacterioferritin (bfr) (Mycolicibacterium paratuberculosis (strain ATCC BAA-968 / K-10) (Mycobacterium paratuberculosis)).